A 203-amino-acid chain; its full sequence is Proteasome subunit beta 2 (203 aa).

Residues 1-10 (MNLQNKILKG) constitute a propeptide, removed in mature form; by autocatalysis. Threonine 11 acts as the Nucleophile in catalysis.

Belongs to the peptidase T1B family. The 20S proteasome core is composed of 14 alpha and 14 beta subunits that assemble into four stacked heptameric rings, resulting in a barrel-shaped structure. The two inner rings, each composed of seven catalytic beta subunits, are sandwiched by two outer rings, each composed of seven alpha subunits. The catalytic chamber with the active sites is on the inside of the barrel. Has a gated structure, the ends of the cylinder being occluded by the N-termini of the alpha-subunits. Is capped at one or both ends by the proteasome regulatory ATPase, PAN.

The protein resides in the cytoplasm. It catalyses the reaction Cleavage of peptide bonds with very broad specificity.. With respect to regulation, the formation of the proteasomal ATPase PAN-20S proteasome complex, via the docking of the C-termini of PAN into the intersubunit pockets in the alpha-rings, triggers opening of the gate for substrate entry. Interconversion between the open-gate and close-gate conformations leads to a dynamic regulation of the 20S proteasome proteolysis activity. Its function is as follows. Component of the proteasome core, a large protease complex with broad specificity involved in protein degradation. In Sulfolobus acidocaldarius (strain ATCC 33909 / DSM 639 / JCM 8929 / NBRC 15157 / NCIMB 11770), this protein is Proteasome subunit beta 2.